The following is a 468-amino-acid chain: MKNFMDKNFLLQTETAQELYHNHAAKMPIIDYHCHLNPQMVADDYRFKSLTEIWLGGDHYKWRAMRSNGVDECFCTGKETSDWEKFEKWAETVPYTFRNPLYHWTHLELKTAFGIDKVLNPKTAREIYDECNEKLSSQEYSARGMMRRYHVETVCTTDDPIDSLEYHIRTRESGFEIKMLPTWRPDKVMAVEVPSDFRTYIEKLSEISEITISDYNDMILALRKRHDYFAEQGCKLSDHGIEEFYAEDYTEGEIKTIFNKIYGGSELTKEEVLKFKSAMLIVLGEMDWEKGWTQQFHYGAIRNNNSRMFKQLGPDTGFDSIGEFATAKAMSKFLDRLNSKGKLTKTILYNLNPCANEVIATMIGNFQDGSIPGKIQFGSGWWFLDQKDGMERQLNALSLLGLLSRFVGMLTDSRSFLSYPRHEYFRRTLCNLLGCDVENGEIPLSEMERVCQMVEDISYFNAKNFFHF.

Belongs to the metallo-dependent hydrolases superfamily. Uronate isomerase family.

It catalyses the reaction D-glucuronate = D-fructuronate. The enzyme catalyses aldehydo-D-galacturonate = keto-D-tagaturonate. The protein operates within carbohydrate metabolism; pentose and glucuronate interconversion. The polypeptide is Uronate isomerase (Bacteroides fragilis (strain ATCC 25285 / DSM 2151 / CCUG 4856 / JCM 11019 / LMG 10263 / NCTC 9343 / Onslow / VPI 2553 / EN-2)).